A 791-amino-acid chain; its full sequence is Sphingomyelin phosphodiesterase 4 (791 aa).

The chain crosses the membrane as a helical span at residues 755–775 (LFALLSFGLFSSTGLILIISF).

It depends on Mg(2+) as a cofactor.

It is found in the endoplasmic reticulum membrane. It localises to the golgi apparatus membrane. The protein localises to the nucleus envelope. Its subcellular location is the cell membrane. The protein resides in the sarcolemma. The catalysed reaction is a sphingomyelin + H2O = phosphocholine + an N-acylsphing-4-enine + H(+). Catalyzes the hydrolysis of membrane sphingomyelin to form phosphorylcholine and ceramide. It has a relevant role in the homeostasis of membrane sphingolipids, thereby influencing membrane integrity, and endoplasmic reticulum organization and function. May sensitize cells to DNA damage-induced apoptosis. In Danio rerio (Zebrafish), this protein is Sphingomyelin phosphodiesterase 4 (smpd4).